Reading from the N-terminus, the 178-residue chain is Large ribosomal subunit protein uL10 (178 aa).

This sequence belongs to the universal ribosomal protein uL10 family. As to quaternary structure, part of the ribosomal stalk of the 50S ribosomal subunit. The N-terminus interacts with L11 and the large rRNA to form the base of the stalk. The C-terminus forms an elongated spine to which L12 dimers bind in a sequential fashion forming a multimeric L10(L12)X complex.

Its function is as follows. Forms part of the ribosomal stalk, playing a central role in the interaction of the ribosome with GTP-bound translation factors. The chain is Large ribosomal subunit protein uL10 from Mycobacterium tuberculosis (strain ATCC 25177 / H37Ra).